Here is a 191-residue protein sequence, read N- to C-terminus: MVPGPNTLFVLKNSVSSGMKGGYLAACGVFIGDAVLMFLAWAGVATLIKTTPILFNIVRYLGAFYLLYLESKILYATLKGKNNEAKSDEPQYGAIFKRALILSLTNPKAILFYVSFFVQFIDVNAPHTGISFFILATTLELVSFCYLSFLIISGAFVTQYIRTKKKLAKVGNSLIGLMFVGFAARLATLQS.

Transmembrane regions (helical) follow at residues 28–48, 50–70, 101–121, 132–152, and 167–187; these read GVFIGDAVLMFLAWAGVATLI, TTPILFNIVRYLGAFYLLYLE, ILSLTNPKAILFYVSFFVQFI, FFILATTLELVSFCYLSFLII, and LAKVGNSLIGLMFVGFAARLA.

It belongs to the Rht family.

The protein localises to the cell inner membrane. The enzyme catalyses L-leucine(in) + H(+)(out) = L-leucine(out) + H(+)(in). Its function is as follows. Exporter of leucine. This chain is Putative leucine efflux protein (leuE), found in Shigella boydii serotype 4 (strain Sb227).